We begin with the raw amino-acid sequence, 205 residues long: DNA-directed RNA polymerase RPB5 homolog (205 aa).

Belongs to the archaeal RpoH/eukaryotic RPB5 RNA polymerase subunit family. As to quaternary structure, part of the viral DNA-directed RNA polymerase that consists of 8 polII-like subunits (RPB1, RPB2, RPB3, RPB5, RPB6, RPB7, RPB9, RPB10), a capping enzyme and a termination factor.

Its subcellular location is the host cytoplasm. It localises to the virion. Component of the DNA-directed RNA polymerase (RNAP) that catalyzes the transcription in the cytoplasm of viral DNA into RNA using the four ribonucleoside triphosphates as substrates. The polypeptide is DNA-directed RNA polymerase RPB5 homolog (African swine fever virus (isolate Pig/Kenya/KEN-50/1950) (ASFV)).